The chain runs to 203 residues: Probable flagellin 1 (203 aa).

The propeptide occupies 1 to 11 (MGMRFLKNEKG).

Belongs to the archaeal flagellin family.

Its subcellular location is the archaeal flagellum. Flagellin is the subunit protein which polymerizes to form the filaments of archaeal flagella. The protein is Probable flagellin 1 (flaB1) of Archaeoglobus fulgidus (strain ATCC 49558 / DSM 4304 / JCM 9628 / NBRC 100126 / VC-16).